A 274-amino-acid chain; its full sequence is Nitrogenase iron protein (274 aa).

8-15 (GKGGIGKS) lines the ATP pocket. Residue C94 participates in [4Fe-4S] cluster binding. ADP-ribosylarginine; by dinitrogenase reductase ADP-ribosyltransferase is present on R97. Residue C131 participates in [4Fe-4S] cluster binding.

The protein belongs to the NifH/BchL/ChlL family. As to quaternary structure, homodimer. It depends on [4Fe-4S] cluster as a cofactor. The reversible ADP-ribosylation of Arg-97 inactivates the nitrogenase reductase and regulates nitrogenase activity.

It catalyses the reaction N2 + 8 reduced [2Fe-2S]-[ferredoxin] + 16 ATP + 16 H2O = H2 + 8 oxidized [2Fe-2S]-[ferredoxin] + 2 NH4(+) + 16 ADP + 16 phosphate + 6 H(+). In terms of biological role, the key enzymatic reactions in nitrogen fixation are catalyzed by the nitrogenase complex, which has 2 components: the iron protein and the molybdenum-iron protein. The sequence is that of Nitrogenase iron protein from Chlorobium phaeovibrioides (strain DSM 265 / 1930) (Prosthecochloris vibrioformis (strain DSM 265)).